The following is a 119-amino-acid chain: Autophagy-related protein 8h (119 aa).

Residue G119 is the site of Phosphatidylethanolamine amidated glycine attachment.

It belongs to the ATG8 family. Interacts with ATG4. Interacts with ATI1. In terms of processing, gly-119 forms then a thioester bond with the 'Cys-558' of ATG7 (E1-like activating enzyme) before being transferred to the 'Cys-258' of ATG3 (the specific E2 conjugating enzyme), in order to be finally amidated with phosphatidylethanolamine. This lipid modification anchors ATG8 to autophagosomes. In terms of tissue distribution, constitutively expressed.

The protein localises to the cytoplasmic vesicle. Its subcellular location is the autophagosome membrane. It is found in the vacuole membrane. It localises to the cytoplasm. The protein resides in the cytoskeleton. Functionally, ubiquitin-like modifier involved in autophagosomes formation. May mediate the delivery of the autophagosomes to the vacuole via the microtubule cytoskeleton. This Arabidopsis thaliana (Mouse-ear cress) protein is Autophagy-related protein 8h (ATG8H).